The chain runs to 751 residues: Centrosomal protein of 68 kDa (751 aa).

Composition is skewed to basic and acidic residues over residues 1–17 and 86–96; these read MALG…EDTK and ASREPVAERSE. Residues 1–253 form a disordered region; the sequence is MALGEEKAEA…PQPVFSGGDA (253 aa). 2 stretches are compositionally biased toward polar residues: residues 131 to 144 and 163 to 175; these read LPQT…TTIC and APSS…SQWK. Residues 176 to 200 show a composition bias toward low complexity; it reads SMPSPGSAAPQPSSCSVSASSTGSS. Ser326 is subject to Phosphoserine. The span at 339 to 348 shows a compositional bias: polar residues; it reads STLKSPTNVF. Disordered stretches follow at residues 339-474, 511-545, and 590-611; these read STLK…ESDD, SPLE…SGDP, and RLDR…KGGE. Composition is skewed to basic and acidic residues over residues 399 to 416 and 433 to 450; these read GSRD…RGAK and RTRD…EKRT. A compositionally biased stretch (polar residues) spans 451–461; it reads SQSARRPTCTE. 2 positions are modified to phosphoserine: Ser466 and Ser472. Low complexity predominate over residues 520–537; the sequence is GPASLPSSSSQSQLPPGA.

Interacts with CNTLN; the interaction recruits CEP68 to the centrosome. Interacts with the SCF(FBXW11) complex which contains SKP1, CUL1 and FBXW11; the interaction is probably mediated by FBXW11 and the complex also contains CDK5RAP2 and PCNT. Also interacts with F-box protein BTRC. Interacts with serine/threonine-protein kinase PLK1; the interaction leads to phosphorylation of CEP68 and its subsequent degradation. Interacts with NEK2; the interaction leads to phosphorylation of CEP68. Post-translationally, phosphorylation by PLK1 is required for binding to BTRC in prometaphase. Phosphorylated directly or indirectly by NEK2. NEK2-mediated phosphorylation promotes CEP68 dissociation from the centrosome and its degradation at the onset of mitosis. In terms of processing, ubiquitinated and targeted for proteasomal degradation in early mitosis by the SCF(BTRC) and/or SCF(FBXW11) E3 ubiquitin-protein ligase complexes. Degradation is complete by prometaphase and is required for removal of CDK5RAP2 from the peripheral pericentriolar material and subsequent centriole separation.

It localises to the cytoplasm. It is found in the cytoskeleton. Its subcellular location is the microtubule organizing center. The protein resides in the centrosome. Involved in maintenance of centrosome cohesion, probably as part of a linker structure which prevents centrosome splitting. Required for localization of CDK5RAP2 to the centrosome during interphase. Contributes to CROCC/rootletin filament formation. This chain is Centrosomal protein of 68 kDa (CEP68), found in Pongo abelii (Sumatran orangutan).